The chain runs to 447 residues: Probable 7-dehydrocholesterol reductase (447 aa).

8 helical membrane passes run 24–44 (LTTA…YLIT), 71–91 (IPSF…FQLI), 102–124 (FVPH…LVYY), 133–153 (IITH…PTII), 157–177 (WGSI…LAYF), 244–264 (YVSN…VDFF), 281–301 (FGWM…TLQA), and 309–329 (IDLS…GYII). NADP(+) is bound by residues K337, R341, I367, W372, and 379-380 (NY). A helical membrane pass occupies residues 393 to 413 (ACGFSHFIPYFYCVYMTILLV). Residues D419, 423 to 427 (CSRKY), and Y434 each bind NADP(+).

It belongs to the ERG4/ERG24 family.

It localises to the membrane. The enzyme catalyses cholesterol + NADP(+) = 7-dehydrocholesterol + NADPH + H(+). It functions in the pathway steroid biosynthesis; cholesterol biosynthesis. Its function is as follows. Catalyzes the last step of the cholesterol synthesis pathway, which transforms cholesta-5,7-dien-3beta-ol (7-dehydrocholesterol,7-DHC) into cholesterol by reducing the C7-C8 double bond of its sterol core. This chain is Probable 7-dehydrocholesterol reductase (DHCR7), found in Acanthamoeba polyphaga (Amoeba).